Reading from the N-terminus, the 325-residue chain is Prenytransferase adrG (325 aa).

7 helical membrane-spanning segments follow: residues 47-67 (LVGV…AVLL), 71-91 (MLLS…DDLI), 117-137 (ALLL…FLPW), 163-183 (PQIT…SLGL), 189-209 (MTPT…IDVI), 236-256 (LLSY…GVLT), and 258-278 (LGLP…WVLL).

The protein belongs to the UbiA prenyltransferase family. Mg(2+) is required as a cofactor.

It is found in the membrane. It carries out the reaction 3,5-dimethylorsellinate + (2E,6E)-farnesyl diphosphate = (3R)-3-farnesyl-6-hydroxy-2,3,5-trimethyl-4-oxocyclohexa-1,5-diene-1-carboxylate + diphosphate + H(+). The protein operates within secondary metabolite biosynthesis; terpenoid biosynthesis. Its function is as follows. Prenytransferase; part of the gene cluster that mediates the biosynthesis of andrastins, meroterpenoid compounds that exhibit inhibitory activity against ras farnesyltransferase, suggesting that they could be promising leads for antitumor agents. The first step of the pathway is the synthesis of 3,5-dimethylorsellinic acid (DMOA) by the polyketide synthase adrD via condensation of one acetyl-CoA starter unit with 3 malonyl-CoA units and 2 methylations. DMAO is then converted to farnesyl-DMAO by the prenyltransferase adrG. The methyltransferase adrK catalyzes the methylation of the carboxyl group of farnesyl-DMAO to farnesyl-DMAO methyl ester which is further converted to epoxyfarnesyl-DMAO methyl ester by the FAD-dependent monooxygenase adrH. The terpene cyclase adrI then catalyzes the carbon skeletal rearrangement to generate the andrastin E, the first compound in the pathway having the andrastin scaffold, with the tetracyclic ring system. The post-cyclization tailoring enzymes adrF, adrE, adrJ, and adrA, are involved in the conversion of andrastin E into andrastin A. The short chain dehydrogenase adrF is responsible for the oxidation of the C-3 a hydroxyl group of andrastin E to yield the corresponding ketone, andrastin D. The ketoreductase adrE stereoselectively reduces the carbonyl moiety to reverse the stereochemistry of the C-3 position to yield andrastin F. The acetyltransferase adrJ is the acetyltransferase that attaches the acetyl group to the C-3 hydroxyl group of andrastin F to yield andrastin C. Finally, the cytochrome P450 monooxygenase adrA catalyzes two sequential oxidation reactions of the C-23 methyl group, to generate the corresponding alcohol andrastin B, and aldehyde andrastin A. This chain is Prenytransferase adrG, found in Penicillium rubens (strain ATCC 28089 / DSM 1075 / NRRL 1951 / Wisconsin 54-1255) (Penicillium chrysogenum).